The following is a 200-amino-acid chain: NAD(P)H dehydrogenase (quinone) (200 aa).

In terms of domain architecture, Flavodoxin-like spans 4 to 191 (VLVLYYSSYG…DIARYQGKHV (188 aa)). FMN-binding positions include 10 to 15 (SSYGHV) and 79 to 81 (TRF). Residue Y12 participates in NAD(+) binding. W99 provides a ligand contact to substrate. FMN contacts are provided by residues 114–120 (STGTQHG) and H135.

The protein belongs to the WrbA family. FMN serves as cofactor.

It carries out the reaction a quinone + NADH + H(+) = a quinol + NAD(+). It catalyses the reaction a quinone + NADPH + H(+) = a quinol + NADP(+). The protein is NAD(P)H dehydrogenase (quinone) of Burkholderia cenocepacia (strain ATCC BAA-245 / DSM 16553 / LMG 16656 / NCTC 13227 / J2315 / CF5610) (Burkholderia cepacia (strain J2315)).